A 168-amino-acid polypeptide reads, in one-letter code: PTS system glucose-specific EIIA component (168 aa).

Residues 38–142 (DEVFSNKIVG…STLTPVIISN (105 aa)) enclose the PTS EIIA type-1 domain. Residues His75 and His90 each coordinate Zn(2+). His90 serves as the catalytic Tele-phosphohistidine intermediate; for EIIA activity. Position 90 is a phosphohistidine; by HPr (His90).

Zn(2+) is required as a cofactor.

The protein resides in the cytoplasm. The phosphoenolpyruvate-dependent sugar phosphotransferase system (sugar PTS), a major carbohydrate active transport system, catalyzes the phosphorylation of incoming sugar substrates concomitantly with their translocation across the cell membrane. The enzyme II complex composed of PtsG and Crr is involved in glucose transport. The sequence is that of PTS system glucose-specific EIIA component (crr) from Buchnera aphidicola subsp. Baizongia pistaciae (strain Bp).